A 159-amino-acid chain; its full sequence is Transcriptional repressor NrdR (159 aa).

The segment at cysteine 3 to cysteine 34 is a zinc-finger region. The ATP-cone domain occupies proline 49–alanine 139.

It belongs to the NrdR family. Zn(2+) serves as cofactor.

In terms of biological role, negatively regulates transcription of bacterial ribonucleotide reductase nrd genes and operons by binding to NrdR-boxes. In Acinetobacter baylyi (strain ATCC 33305 / BD413 / ADP1), this protein is Transcriptional repressor NrdR.